The following is a 341-amino-acid chain: L-threonine 3-dehydrogenase (341 aa).

Cysteine 38 lines the Zn(2+) pocket. Active-site charge relay system residues include threonine 40 and histidine 43. Zn(2+) is bound by residues histidine 63, glutamate 64, cysteine 93, cysteine 96, cysteine 99, and cysteine 107. NAD(+) is bound by residues isoleucine 175, aspartate 195, arginine 200, leucine 262–isoleucine 264, and isoleucine 286–tyrosine 287.

This sequence belongs to the zinc-containing alcohol dehydrogenase family. As to quaternary structure, homotetramer. Requires Zn(2+) as cofactor.

The protein localises to the cytoplasm. It catalyses the reaction L-threonine + NAD(+) = (2S)-2-amino-3-oxobutanoate + NADH + H(+). The protein operates within amino-acid degradation; L-threonine degradation via oxydo-reductase pathway; glycine from L-threonine: step 1/2. Its function is as follows. Catalyzes the NAD(+)-dependent oxidation of L-threonine to 2-amino-3-ketobutyrate. The protein is L-threonine 3-dehydrogenase of Shewanella woodyi (strain ATCC 51908 / MS32).